The primary structure comprises 31 residues: Cyclotide glopa C (31 aa).

A cross-link (cyclopeptide (Gly-Asn)) is located at residues 1-31; it reads GDLPICGETCFEGGNCRIPGCTCVWPFCSKN. Cystine bridges form between Cys-6–Cys-21, Cys-10–Cys-23, and Cys-16–Cys-28.

This is a cyclic peptide.

Probably participates in a plant defense mechanism. This chain is Cyclotide glopa C, found in Gloeospermum pauciflorum.